Reading from the N-terminus, the 402-residue chain is Probable 2,3-bisphosphoglycerate-independent phosphoglycerate mutase (402 aa).

The protein belongs to the BPG-independent phosphoglycerate mutase family. A-PGAM subfamily.

The enzyme catalyses (2R)-2-phosphoglycerate = (2R)-3-phosphoglycerate. It participates in carbohydrate degradation; glycolysis; pyruvate from D-glyceraldehyde 3-phosphate: step 3/5. Its function is as follows. Catalyzes the interconversion of 2-phosphoglycerate and 3-phosphoglycerate. This chain is Probable 2,3-bisphosphoglycerate-independent phosphoglycerate mutase, found in Thermosipho africanus (strain TCF52B).